Here is a 79-residue protein sequence, read N- to C-terminus: Conotoxin Vi6.9 (79 aa).

The signal sequence occupies residues 1–22 (MKLTCMVIITVLFLTASQLITA). The propeptide occupies 23–47 (DYSRDQRQYRAVRLGDEMRNFKGAR). Disulfide bonds link Cys49-Cys62, Cys56-Cys67, and Cys61-Cys77. 4-hydroxyproline occurs at positions 60 and 63.

It belongs to the conotoxin O1 superfamily. Expressed by the venom duct.

It localises to the secreted. Functionally, ion channel inhibitor that inhibits the increase in intracellular calcium upon depolarization in DRG neurons. In vivo, both intraperitoneal and intracranial injections into mice induce hyperactivity. The chain is Conotoxin Vi6.9 from Conus virgo (Virgin cone).